The following is a 149-amino-acid chain: Transcriptional repressor NrdR (149 aa).

Residues 3–34 fold into a zinc finger; sequence CPFCTAKDTKVIDSRLVGGGHQVRRRRECNDC. An ATP-cone domain is found at 49–139; it reads PRVIKQDGSR…VYRSFEDIRE (91 aa).

The protein belongs to the NrdR family. Requires Zn(2+) as cofactor.

Functionally, negatively regulates transcription of bacterial ribonucleotide reductase nrd genes and operons by binding to NrdR-boxes. This is Transcriptional repressor NrdR from Pseudoalteromonas translucida (strain TAC 125).